Consider the following 215-residue polypeptide: 3-isopropylmalate dehydratase small subunit (215 aa).

This sequence belongs to the LeuD family. LeuD type 1 subfamily. In terms of assembly, heterodimer of LeuC and LeuD.

The catalysed reaction is (2R,3S)-3-isopropylmalate = (2S)-2-isopropylmalate. The protein operates within amino-acid biosynthesis; L-leucine biosynthesis; L-leucine from 3-methyl-2-oxobutanoate: step 2/4. In terms of biological role, catalyzes the isomerization between 2-isopropylmalate and 3-isopropylmalate, via the formation of 2-isopropylmaleate. The sequence is that of 3-isopropylmalate dehydratase small subunit (leuD) from Azotobacter vinelandii.